The following is a 354-amino-acid chain: Replication factor C subunit 5 (354 aa).

40–47 (YGPSGSGK) contacts ATP.

It belongs to the activator 1 small subunits family. Heterotetramer of subunits RFC2, RFC3, RFC4 and RFC5 that can form a complex with RFC1. In terms of tissue distribution, expressed in roots, leaves, shoot apical meristem (SAM), flag leaves and panicles.

Its subcellular location is the nucleus. Functionally, may be involved in DNA replication and thus regulate cell proliferation. The sequence is that of Replication factor C subunit 5 (RFC5) from Oryza sativa subsp. japonica (Rice).